Reading from the N-terminus, the 873-residue chain is Tetratricopeptide repeat protein 16 (873 aa).

The disordered stretch occupies residues 1-20 (MTDSDEDALKVDQGPSRDIP). TPR repeat units follow at residues 61-94 (VREY…DPQL), 96-128 (DFYA…QQDN), 136-169 (TFVL…QPEK), 251-284 (AQQA…NPLD), 285-318 (PSLF…VTED), 331-364 (LLTY…EQQE), 365-398 (KGLY…SPQD), and 406-439 (GLLQ…NPQK). Disordered regions lie at residues 553–626 (EELK…TSET) and 639–873 (SATA…YEAV). The segment covering 571–582 (GEAEAPEEEEEK) has biased composition (acidic residues). Residues 583–593 (EKEKKEEKKSE) are compositionally biased toward basic and acidic residues. 3 stretches are compositionally biased toward polar residues: residues 600-626 (ASLS…TSET), 639-663 (SATA…NNRE), and 675-693 (TQGQ…SQRR). Over residues 694-708 (NSSKTKATIHKRNSS) the composition is skewed to basic residues. The span at 709 to 750 (KTKATQSQRRNSSKTRATQGQGQSSSKTEATQGQRQSSSEIE) shows a compositional bias: polar residues. The span at 763 to 784 (KTTRSPRQRPRKVKAARGRSWR) shows a compositional bias: basic residues. Composition is skewed to polar residues over residues 800 to 828 (RSST…GQRS) and 836 to 860 (GKSQ…SLSK).

The polypeptide is Tetratricopeptide repeat protein 16 (TTC16) (Homo sapiens (Human)).